The primary structure comprises 520 residues: FAD-linked oxidoreductase OXR2 (520 aa).

An N-terminal signal peptide occupies residues 1–23; the sequence is MKSFSLLASAGLATLASLPLTMA. Residues asparagine 77, asparagine 220, asparagine 378, and asparagine 390 are each glycosylated (N-linked (GlcNAc...) asparagine). Positions 79 to 251 constitute an FAD-binding PCMH-type domain; sequence SRPTIRLVVV…TSFQSKIYPR (173 aa).

Belongs to the oxygen-dependent FAD-linked oxidoreductase family. FAD is required as a cofactor.

It participates in polyketide biosynthesis. FAD-linked oxidoreductase; part of the gene cluster that mediates the biosynthesis of pyriculol and pyriculariol, two heptaketides that induce lesion formation upon application on rice leaves but are dispensable for pathogenicity. The highly reducing polyketide synthase synthesizes the heptaketide backbone of pyriculol and pyriculariol. Pyriculol and pyriculariol contain several hydroxyl moieties and double bonds, so it can be assumed that several reduction steps occur during biosynthesis. These reactions could be executed by PKS19 itself or partly by the tailoring enzymes OXR1, OXR2, RED1, RED2 or RED3, identified within the cluster. The FAD-linked oxidoreductase OXR1 is the only tailoring enzyme for which the function has been determined yet, and is involved in the oxidation of dihydropyriculol and dihydropyriculariol into pyriculol and pyriculariol, respectively. In Pyricularia oryzae (strain 70-15 / ATCC MYA-4617 / FGSC 8958) (Rice blast fungus), this protein is FAD-linked oxidoreductase OXR2.